The following is an 87-amino-acid chain: Small ribosomal subunit protein bS20 (87 aa).

Positions 1-22 (MANTSQARKRARQAGVRRVRNA) are disordered. A compositionally biased stretch (basic residues) spans 7–20 (ARKRARQAGVRRVR).

This sequence belongs to the bacterial ribosomal protein bS20 family.

Binds directly to 16S ribosomal RNA. In Nitrosococcus oceani (strain ATCC 19707 / BCRC 17464 / JCM 30415 / NCIMB 11848 / C-107), this protein is Small ribosomal subunit protein bS20.